Reading from the N-terminus, the 580-residue chain is Purine permease (580 aa).

Transmembrane regions (helical) follow at residues 68–88 (PLVL…AGVI), 107–127 (SQYL…VQMF), 136–156 (YYVG…ITVA), 184–204 (YGAL…LSFM), 211–231 (ALFP…SLIG), 263–283 (LPWG…TIIL), 294–314 (SCAV…CGYF), 385–405 (LGNG…MSVF), 426–446 (CCFF…LVAI), 447–467 (PSSV…ISGV), 481–501 (FILT…DWFS), and 522–542 (LVMA…NLIL).

The protein belongs to the nucleobase:cation symporter-2 (NCS2) (TC 2.A.40) family.

Its subcellular location is the membrane. Functionally, able to transport with low efficiency all natural purines as well as purine analogs. This is Purine permease (uapC) from Emericella nidulans (strain FGSC A4 / ATCC 38163 / CBS 112.46 / NRRL 194 / M139) (Aspergillus nidulans).